A 58-amino-acid polypeptide reads, in one-letter code: Galectin-1 (58 aa).

A Galectin domain is found at 2-58; it reads GITXTSLHVAPGARLAVKGDIPAGAKSWVINLGKGENDIMLHFNARFDAHGDIRTIV. A beta-D-galactoside is bound by residues 43-47 and histidine 51; that span reads HFNAR.

In terms of assembly, monomer. Detected in most tissues, most abundantly in skin.

Its subcellular location is the secreted. The protein resides in the extracellular space. It is found in the extracellular matrix. Functionally, may regulate cell apoptosis and cell differentiation. Binds beta-galactoside and a wide array of complex carbohydrates. This Podarcis hispanicus (Iberian wall lizard) protein is Galectin-1.